A 104-amino-acid chain; its full sequence is Iron-sulfur cluster assembly protein CyaY (104 aa).

The protein belongs to the frataxin family.

Involved in iron-sulfur (Fe-S) cluster assembly. May act as a regulator of Fe-S biogenesis. In Aliivibrio fischeri (strain ATCC 700601 / ES114) (Vibrio fischeri), this protein is Iron-sulfur cluster assembly protein CyaY.